Consider the following 62-residue polypeptide: Protein CYSTEINE-RICH TRANSMEMBRANE MODULE 2 (62 aa).

The next 2 helical transmembrane spans lie at 23-39 (VAVAATRSASVVAAAFD) and 33-53 (VVAAAFDFYICIIISTLLSLI).

It belongs to the CYSTM1 family. Heterodimers. Binds weakly to CYSTM7 and WIH1/CYSTM13. In terms of tissue distribution, mostly expressed in stems, siliques, leaves and flowers and, to a lower extent, in roots.

It is found in the cell membrane. The protein resides in the nucleus. The protein localises to the secreted. Its subcellular location is the cell wall. Involved in resistance to abiotic stress. In terms of biological role, confers resistance to heavy metal ions (e.g. cadmium (CdCl(2)) and copper (CuCl(2))) by chelating them at the plasma membrane of root cells, thus stopping their entry and reducing their accumulation. The polypeptide is Protein CYSTEINE-RICH TRANSMEMBRANE MODULE 2 (Arabidopsis thaliana (Mouse-ear cress)).